The following is a 212-amino-acid chain: Nucleoredoxin-like protein 1 (212 aa).

Positions 1–164 constitute a Thioredoxin domain; the sequence is MASLFSGRIL…AAEVLDRNFQ (164 aa). Residues 191 to 212 are disordered; it reads AARGGRDPGGGGGEEGGAGGLF. Positions 197–212 are enriched in gly residues; the sequence is DPGGGGGEEGGAGGLF.

It belongs to the nucleoredoxin family. As to quaternary structure, interacts with isoform 1 of BSG.

Its subcellular location is the cell projection. The protein localises to the cilium. The protein resides in the photoreceptor outer segment. In terms of biological role, plays an important role in retinal cone photoreceptor survival. In association with glucose transporter SLC16A1/GLUT1 and BSG, promotes retinal cone survival by enhancing aerobic glycolysis and accelerating the entry of glucose into photoreceptors. May play a role in cone cell viability, slowing down cone degeneration, does not seem to play a role in degenerating rods. In Homo sapiens (Human), this protein is Nucleoredoxin-like protein 1 (NXNL1).